The following is a 341-amino-acid chain: GTPase Obg (341 aa).

In terms of domain architecture, Obg spans 2-160; the sequence is SGFIDEVPIQ…FSLILELKLL (159 aa). The region spanning 161–330 is the OBG-type G domain; it reads ADIGIVGLPN…LLERIDKVFF (170 aa). Residues 167 to 174, 192 to 196, 215 to 218, 282 to 285, and 311 to 313 each bind GTP; these read GLPNAGKS, FTTLS, DIPG, NKMD, and SAD. Residues S174 and T194 each coordinate Mg(2+).

The protein belongs to the TRAFAC class OBG-HflX-like GTPase superfamily. OBG GTPase family. In terms of assembly, monomer. Requires Mg(2+) as cofactor.

It localises to the cytoplasm. Its function is as follows. An essential GTPase which binds GTP, GDP and possibly (p)ppGpp with moderate affinity, with high nucleotide exchange rates and a fairly low GTP hydrolysis rate. Plays a role in control of the cell cycle, stress response, ribosome biogenesis and in those bacteria that undergo differentiation, in morphogenesis control. The polypeptide is GTPase Obg (Leptospira biflexa serovar Patoc (strain Patoc 1 / Ames)).